Reading from the N-terminus, the 500-residue chain is Glycerol kinase (500 aa).

Threonine 13 contributes to the ADP binding site. Residues threonine 13, threonine 14, and serine 15 each coordinate ATP. Threonine 13 contributes to the sn-glycerol 3-phosphate binding site. Arginine 17 contributes to the ADP binding site. Sn-glycerol 3-phosphate is bound by residues arginine 83, glutamate 84, tyrosine 135, and aspartate 244. Residues arginine 83, glutamate 84, tyrosine 135, aspartate 244, and glutamine 245 each coordinate glycerol. ADP-binding residues include threonine 266 and glycine 309. Positions 266, 309, 313, and 410 each coordinate ATP. Residues glycine 410 and asparagine 414 each coordinate ADP.

This sequence belongs to the FGGY kinase family.

It catalyses the reaction glycerol + ATP = sn-glycerol 3-phosphate + ADP + H(+). The protein operates within polyol metabolism; glycerol degradation via glycerol kinase pathway; sn-glycerol 3-phosphate from glycerol: step 1/1. Its activity is regulated as follows. Inhibited by fructose 1,6-bisphosphate (FBP). Functionally, key enzyme in the regulation of glycerol uptake and metabolism. Catalyzes the phosphorylation of glycerol to yield sn-glycerol 3-phosphate. In Burkholderia cenocepacia (strain HI2424), this protein is Glycerol kinase.